The sequence spans 886 residues: Vam6/Vps39-like protein (886 aa).

The CNH domain occupies 15–294; it reads PLQIDCLAAW…RFITSGGSNI (280 aa). The CHCR repeat unit spans residues 573-750; that stretch reads FTEDLPEVES…LLRMYLSPPS (178 aa).

The protein belongs to the VAM6/VPS39 family. Homooligomer. Interacts with TGFBR2 and, less efficiently, with TGFBR1; interaction with TGFBR2 is independent of the receptor kinase activity and of the presence of TGF-beta. Also interacts with ACVR2B, but not with BMPR2. Interacts with SMAD4, preferentially following TGF-beta treatment. Does not interact with SAMD2 or SMAD3. Component of the homotypic fusion and vacuole protein sorting (HOPS) complex; the core of which composed of the class C Vps proteins VPS11, VPS16, VPS18 and VPS33A, is associated with VPS39 and VPS41. Interacts with PLEKHM2; involved in VPS39 recruitment to ARL8B-containing lysosomes. Associates with adapter protein complex 3 (AP-3) and clathrin:AP-3 complexes. Interacts with STX17; this interaction is increased in the absence of TMEM39A. Interacts with RAB7, RAB2A and RAB2B. Interacts with RAB2A (GTP-bound); the interaction contributes to obtaining a functional HOPS complex that promotes autophagosome-lysosome membrane fusion driven by STX17-SNAP29-VAMP8. Interacts with RAB39A (GTP-bound) and RAB39B (GTP-bound); interaction with RAB39A contributes to obtaining a functional HOPS complex. In terms of assembly, (Microbial infection) Interacts with SARS coronavirus-2/SARS-CoV-2 ORF3A protein; the interaction is direct and sequestrates VPS39, thereby preventing HOPS complex from interacting with the autophagosomal SNARE protein STX17. ORF3A enhances the interaction of VPS39 with VPS11 and VPS18, while its interaction with the VPS16:VPS33A module is attenuated. Widely expressed, with highest levels in heart, skeletal muscle, kidney, pancreas, brain, placenta and spleen.

It is found in the cytoplasm. Its subcellular location is the lysosome membrane. The protein localises to the late endosome membrane. Its function is as follows. Regulator of TGF-beta/activin signaling, inhibiting SMAD3- and activating SMAD2-dependent transcription. Acts by interfering with SMAD3/SMAD4 complex formation, this would lead to inhibition of SMAD3-dependent transcription and relieve SMAD3 inhibition of SMAD2-dependent promoters, thus increasing SMAD2-dependent transcription. Does not affect TGF-beta-induced SMAD2 or SMAD3 phosphorylation, nor SMAD2/SMAD4 complex formation. Plays a role in vesicle-mediated protein trafficking to lysosomal compartments including the endocytic membrane transport and autophagic pathways. Acts as a component of the HOPS endosomal tethering complex. This complex is proposed to be involved in the Rab5-to-Rab7 endosome conversion probably implicating MON1A/B, and via binding SNAREs and SNARE complexes to mediate tethering and docking events during SNARE-mediated membrane fusion. The HOPS complex is proposed to be recruited to Rab7 on the late endosomal membrane and to regulate late endocytic, phagocytic and autophagic traffic towards lysosomes. Involved in homotypic vesicle fusions between late endosomes and in heterotypic fusions between late endosomes and lysosomes. Required for fusion of endosomes and autophagosomes with lysosomes. This is Vam6/Vps39-like protein from Homo sapiens (Human).